The following is a 1851-amino-acid chain: Chitin synthase (1851 aa).

The segment at 1 to 21 is disordered; that stretch reads MQYHQHQHQFPGPGPSHTSVY. At 1–108 the chain is on the cytoplasmic side; it reads MQYHQHQHQF…KDTLYNGFLQ (108 aa). A helical membrane pass occupies residues 109 to 129; sequence VLKMITFVALFVTTLGSSILA. The Extracellular segment spans residues 130–168; the sequence is KLSLLVMAAGLGQAGHNISICPDKIPESPKNSVLISPKN. A glycan (N-linked (GlcNAc...) asparagine) is linked at asparagine 146. A helical transmembrane segment spans residues 169–189; sequence AAKWAWALLLAICIPELLCFA. Residues 190 to 208 are Cytoplasmic-facing; that stretch reads RSLHRSLFRKVRGPSFLQF. Residues 209–229 form a helical membrane-spanning segment; the sequence is LLVFTVESVHAFGLGALVFAI. Residues 230–234 are Extracellular-facing; that stretch reads MPRGM. A helical transmembrane segment spans residues 235-255; it reads VITMLQLGNSLCLIPSLLLPL. At 256-261 the chain is on the cytoplasmic side; the sequence is SRSRSR. Residues 262–282 form a helical membrane-spanning segment; the sequence is WLPLLLLLDGSAILAQSSAAI. Residues 283–291 are Extracellular-facing; it reads WRGSIPLER. A helical membrane pass occupies residues 292–312; that stretch reads FGFVFLCTSLISIAWWQNFVH. The Cytoplasmic segment spans residues 313 to 337; it reads PHSFLPATRFFAHYAAKLRECRSKT. A helical transmembrane segment spans residues 338 to 358; sequence FVVLSPWKCLIFTFCMFQFVP. The Extracellular segment spans residues 359-544; the sequence is PQIPFRELLQ…ELNQFTTAND (186 aa). Asparagine 385 and asparagine 435 each carry an N-linked (GlcNAc...) asparagine glycan. Residues 432–522 form a disordered region; that stretch reads LFRNGTRRPP…DADEQEEEEE (91 aa). Basic and acidic residues predominate over residues 442 to 454; it reads KKEEVKKNKMDSK. Basic residues predominate over residues 455–465; it reads KKTKKLKKKKG. Residues 466-478 show a composition bias toward low complexity; sequence GNNNATSTNSSEK. Asparagine 469 and asparagine 474 each carry an N-linked (GlcNAc...) asparagine glycan. Over residues 513-522 the composition is skewed to acidic residues; it reads DADEQEEEEE. Residues 545–565 traverse the membrane as a helical segment; that stretch reads ALWLVFVQAGSVLLCQLCAKF. At 566-573 the chain is on the cytoplasmic side; the sequence is ACKVVMQR. The chain crosses the membrane as a helical span at residues 574–594; that stretch reads VGLALPVVLSIPFGILFLAYS. Topologically, residues 595-631 are extracellular; sequence CRQKATNPCHLSEWMSKELFWQCPTRPFHWQRFFREQ. A helical membrane pass occupies residues 632–652; the sequence is PNLLWLCWWLSQCWITIHLWL. The Cytoplasmic segment spans residues 653–1124; sequence PRQERLAKSE…VSIWYIAYQL (472 aa). The tract at residues 693–718 is disordered; sequence SEDIDTEEEANEGGGEQEDGNSSTHT. Residues 696 to 711 are compositionally biased toward acidic residues; that stretch reads IDTEEEANEGGGEQED. A helical membrane pass occupies residues 1125–1145; the sequence is VMLFSSVLGPGTIFLMIVGAI. Over 1146-1154 the chain is Extracellular; the sequence is SISFNIDTR. Residues 1155–1175 form a helical membrane-spanning segment; sequence LALLIVTTPVLCFCVCCLTCG. At 1176-1179 the chain is on the cytoplasmic side; that stretch reads TETQ. The chain crosses the membrane as a helical span at residues 1180–1200; that stretch reads LLLAQVIGALFAMLMTAVIVG. Residues 1201 to 1209 are Extracellular-facing; that stretch reads TSLQIQKDG. A helical transmembrane segment spans residues 1210-1230; it reads LLSPHSIFLFTVLGSWSFSAL. Over 1231–1235 the chain is Cytoplasmic; it reads LHPLE. The helical transmembrane segment at 1236 to 1256 threads the bilayer; the sequence is FGCLLPCGLYFLAIPCMYMLL. The Extracellular segment spans residues 1257 to 1461; the sequence is PVYSLCNLNT…QRGLNELRNT (205 aa). The N-linked (GlcNAc...) asparagine glycan is linked to asparagine 1274. Residues 1329-1383 adopt a coiled-coil conformation; sequence CADETVEVRKLDENFRKIERKLQSLERRTNGQGNNAEEEGKEEEETGKSEQERKE. The segment at 1350–1402 is disordered; that stretch reads LQSLERRTNGQGNNAEEEGKEEEETGKSEQERKEGREEGKEEEGKMSKRKKEE. Positions 1364-1373 are enriched in acidic residues; sequence AEEEGKEEEE. A compositionally biased stretch (basic and acidic residues) spans 1374–1402; it reads TGKSEQERKEGREEGKEEEGKMSKRKKEE. The helical transmembrane segment at 1462 to 1482 threads the bilayer; that stretch reads CCSAFFMVNIVFIIVVLVLQL. At 1483-1527 the chain is on the cytoplasmic side; the sequence is QKDCLHIEWPLGPLVNQTRVQCGGGGGRDFEGEEWIMSRLQLEPM. A helical transmembrane segment spans residues 1528 to 1548; sequence GFVFIVFFLIILFIQFLAMLF. Over 1549 to 1851 the chain is Extracellular; that stretch reads HRFGTFTHII…FLGTTNKRAK (303 aa). Positions 1626–1658 are disordered; sequence GKRQQNAQIPPRCEKGGNERGEESPTSLPAPPV. Basic and acidic residues predominate over residues 1637–1648; the sequence is RCEKGGNERGEE. The N-linked (GlcNAc...) asparagine glycan is linked to asparagine 1660. The disordered stretch occupies residues 1765–1851; sequence HSIFPSSSES…FLGTTNKRAK (87 aa). Residues 1781 to 1822 are compositionally biased toward basic and acidic residues; the sequence is GGGRGRGREQERDKCLEGKKEKFRQRVEEGPARCHRLEELFG. Basic residues predominate over residues 1823-1834; sequence KSRKGGPQKRGK.

This sequence belongs to the chitin synthase family. Class IV subfamily. May require proteolytic cleavage for activation.

The protein resides in the cell membrane. It catalyses the reaction [(1-&gt;4)-N-acetyl-beta-D-glucosaminyl](n) + UDP-N-acetyl-alpha-D-glucosamine = [(1-&gt;4)-N-acetyl-beta-D-glucosaminyl](n+1) + UDP + H(+). Required for the synthesis of chitin. This Meloidogyne artiellia (British root-knot nematode) protein is Chitin synthase.